A 224-amino-acid chain; its full sequence is Peroxiredoxin-6 (224 aa).

In terms of domain architecture, Thioredoxin spans 5-169; sequence LLLGDEAPNF…ILRVVDSLQL (165 aa). Residues 31-40 form a required and sufficient for targeting to lysosomes and lamellar bodies region; that stretch reads DSWGILFSHP. Residue threonine 44 is modified to Phosphothreonine. Cysteine 47 acts as the Cysteine sulfenic acid (-SOH) intermediate; for peroxidase activity in catalysis. Lysine 63 carries the post-translational modification N6-acetyllysine. Tyrosine 89 bears the Phosphotyrosine mark. Phosphothreonine is present on threonine 93. The For phospholipase activity role is filled by aspartate 140. Residue threonine 177 is modified to Phosphothreonine; by MAPK. At lysine 209 the chain carries N6-acetyllysine; alternate. Lysine 209 bears the N6-succinyllysine; alternate mark.

This sequence belongs to the peroxiredoxin family. Prx6 subfamily. As to quaternary structure, homodimer. Interacts with GSTP1; mediates PRDX6 glutathionylation and regeneration. Interacts with APEX1. Interacts with STH. May interact with FAM168B. May interact with HTR2A. Irreversibly inactivated by overoxidation of Cys-47 to sulfinic acid (Cys-SO(2)H) and sulfonic acid (Cys-SO(3)H) forms upon oxidative stress. Post-translationally, phosphorylation at Thr-177 by MAP kinases increases the phospholipase activity of the enzyme. The phosphorylated form exhibits a greater lysophosphatidylcholine acyltransferase activity compared to the non-phosphorylated form. As to expression, highly expressed in heart, kidney and liver. Moderate expression in brain and stomach. Very low levels in intestine.

The protein resides in the cytoplasm. Its subcellular location is the lysosome. It carries out the reaction a hydroperoxide + 2 glutathione = an alcohol + glutathione disulfide + H2O. The catalysed reaction is a 1,2-diacyl-sn-glycero-3-phosphocholine + H2O = a 1-acyl-sn-glycero-3-phosphocholine + a fatty acid + H(+). The enzyme catalyses a 1-acyl-sn-glycero-3-phosphocholine + an acyl-CoA = a 1,2-diacyl-sn-glycero-3-phosphocholine + CoA. It catalyses the reaction 1-hexadecanoyl-sn-glycero-3-phosphocholine + hexadecanoyl-CoA = 1,2-dihexadecanoyl-sn-glycero-3-phosphocholine + CoA. It carries out the reaction 1,2-dihexadecanoyl-sn-glycero-3-phosphocholine + H2O = 1-hexadecanoyl-sn-glycero-3-phosphocholine + hexadecanoate + H(+). Its activity is regulated as follows. MJ33 or lithium;[(2R)-1-hexadecoxy-3-(2,2,2-trifluoroethoxy)propan-2-yl] methyl phosphate inhibits its phospholipase A2 activity. CI-976 or 2,2-Dimethyl-N-(2,4,6-trimethoxyphenyl)dodecanamide inhibits its lysophosphatidylcholine acyltransferase activity. Thiol-specific peroxidase that catalyzes the reduction of hydrogen peroxide and organic hydroperoxides to water and alcohols, respectively. Can reduce H(2)O(2) and short chain organic, fatty acid, and phospholipid hydroperoxides. Has phospholipase activity. Can either reduce the oxidized sn-2 fatty acyl group of phospholipids (peroxidase activity) or hydrolyze the sn-2 ester bond of phospholipids (phospholipase activity). These activities are dependent on binding to phospholipids at acidic pH and to oxidized phospholipds at cytosolic pH. Plays a role in cell protection against oxidative stress by detoxifying peroxides and in phospholipid homeostasis. Exhibits acyl-CoA-dependent lysophospholipid acyltransferase which mediates the conversion of lysophosphatidylcholine (1-acyl-sn-glycero-3-phosphocholine or LPC) into phosphatidylcholine (1,2-diacyl-sn-glycero-3-phosphocholine or PC). Shows a clear preference for LPC as the lysophospholipid and for palmitoyl CoA as the fatty acyl substrate. In Mus musculus (Mouse), this protein is Peroxiredoxin-6 (Prdx6).